The chain runs to 248 residues: FCS-Like Zinc finger 14 (248 aa).

Positions V85–G94 are enriched in polar residues. The interval V85–T108 is disordered. An FLZ-type zinc finger spans residues G181 to E224.

It belongs to the FLZ family. Interacts with KIN10 and KIN11 via its FLZ-type zinc finger domain. Interacts with KINB1, KINB2 and KINB3 via its N-terminal part.

It is found in the cytoplasm. Its subcellular location is the nucleus. In terms of biological role, may act as an adapter to facilitate the interaction of SnRK1 complex with effector proteins, conferring tissue- and stimulus-type specific differences in the SnRK1 regulation pathway. The polypeptide is FCS-Like Zinc finger 14 (Arabidopsis thaliana (Mouse-ear cress)).